The primary structure comprises 144 residues: Large ribosomal subunit protein uL15 (144 aa).

Residues 1 to 49 (MRLNTLSPAAGAKSAAKRVGRGIGSGTGKTCGRGHKGQKSRSGGGVRVG) form a disordered region. Gly residues predominate over residues 21-31 (RGIGSGTGKTC).

Belongs to the universal ribosomal protein uL15 family. In terms of assembly, part of the 50S ribosomal subunit.

Functionally, binds to the 23S rRNA. This Shewanella halifaxensis (strain HAW-EB4) protein is Large ribosomal subunit protein uL15.